We begin with the raw amino-acid sequence, 237 residues long: Aspartate/glutamate leucyltransferase (237 aa).

The protein belongs to the R-transferase family. Bpt subfamily.

The protein localises to the cytoplasm. It carries out the reaction N-terminal L-glutamyl-[protein] + L-leucyl-tRNA(Leu) = N-terminal L-leucyl-L-glutamyl-[protein] + tRNA(Leu) + H(+). The enzyme catalyses N-terminal L-aspartyl-[protein] + L-leucyl-tRNA(Leu) = N-terminal L-leucyl-L-aspartyl-[protein] + tRNA(Leu) + H(+). In terms of biological role, functions in the N-end rule pathway of protein degradation where it conjugates Leu from its aminoacyl-tRNA to the N-termini of proteins containing an N-terminal aspartate or glutamate. This is Aspartate/glutamate leucyltransferase from Marinobacter nauticus (strain ATCC 700491 / DSM 11845 / VT8) (Marinobacter aquaeolei).